The sequence spans 100 residues: Urease subunit gamma (100 aa).

This sequence belongs to the urease gamma subunit family. In terms of assembly, heterotrimer of UreA (gamma), UreB (beta) and UreC (alpha) subunits. Three heterotrimers associate to form the active enzyme.

It localises to the cytoplasm. It catalyses the reaction urea + 2 H2O + H(+) = hydrogencarbonate + 2 NH4(+). It participates in nitrogen metabolism; urea degradation; CO(2) and NH(3) from urea (urease route): step 1/1. In Rhodopseudomonas palustris (strain ATCC BAA-98 / CGA009), this protein is Urease subunit gamma.